We begin with the raw amino-acid sequence, 508 residues long: Drug efflux pump JefA (508 aa).

The next 14 helical transmembrane spans lie at 9–29 (VLAT…VNVA), 46–66 (WAVA…ALLG), 75–95 (FVFG…PVSL), 104–124 (IQGL…SHSF), 136–156 (NWMA…GLMV), 163–183 (SVFL…LVGV), 194–214 (LDWV…YTII), 222–242 (QSAG…WLFV), 265–285 (SVLI…MVIT), 297–317 (LHAG…SLLA), 328–348 (LPVL…AISM), 354–374 (VALV…TPLL), 399–419 (LGGI…LGAA), and 479–499 (GIKL…VLGW).

Belongs to the major facilitator superfamily.

It is found in the cell inner membrane. Functionally, involved in resistance to ethambutol and isoniazid. The sequence is that of Drug efflux pump JefA from Mycobacterium tuberculosis (strain CDC 1551 / Oshkosh).